A 232-amino-acid polypeptide reads, in one-letter code: MQRTVNIQAVESKLKFTFSQPRLLVTALTHPSYRNEFPSDGEDSERLEFLGDAVLGLVVTEHLFLLFPSLNEGLLSTTRSALVNAEACFNYTQKLSLGEHLLIGRGEKMQSHRGKISAYANLFEAILGAVYLDGGLAPARQIIVPLLPNKEAILPLMLVNPKNRLQQFTQQTLKVLPTYIALPWSSEDGTPGYHVQVFVNEKLWGEGFAGSKKEAEKLAAKQALSTHDDNKN.

An RNase III domain is found at 7–135 (IQAVESKLKF…ILGAVYLDGG (129 aa)). E48 is a Mg(2+) binding site. D52 is an active-site residue. Mg(2+) is bound by residues N121 and E124. The active site involves E124. The DRBM domain maps to 160 to 229 (NPKNRLQQFT…AKQALSTHDD (70 aa)).

The protein belongs to the ribonuclease III family. Homodimer. The cofactor is Mg(2+).

The protein resides in the cytoplasm. The enzyme catalyses Endonucleolytic cleavage to 5'-phosphomonoester.. In terms of biological role, digests double-stranded RNA. Involved in the processing of primary rRNA transcript to yield the immediate precursors to the large and small rRNAs (23S and 16S). Processes some mRNAs, and tRNAs when they are encoded in the rRNA operon. Processes pre-crRNA and tracrRNA of type II CRISPR loci if present in the organism. The protein is Ribonuclease 3 of Chlamydia muridarum (strain MoPn / Nigg).